A 292-amino-acid polypeptide reads, in one-letter code: Transmembrane and ubiquitin-like domain-containing protein 1 (292 aa).

Residues 11–31 (VTLLFGVVFLVLVLVLAWAST) traverse the membrane as a helical segment. Residues 34–143 (VEPPEHLLSP…TQPSAEDAAS (110 aa)) are disordered. A compositionally biased stretch (basic and acidic residues) spans 71 to 80 (VRDEDDKSEP). Over residues 84–94 (AGAAGQSADGS) the composition is skewed to low complexity. Residues 149 to 222 (MVLRLKFLND…LHCHISQHAT (74 aa)) enclose the Ubiquitin-like domain. Helical transmembrane passes span 237–257 (VALN…SVLW) and 269–289 (APAT…AFGV).

Its subcellular location is the membrane. It is found in the cytoplasm. The protein localises to the nucleus. In terms of biological role, may contribute to the regulation of translation during cell-cycle progression. May contribute to the regulation of cell proliferation. The membrane form is involved in sterol-regulated ubiquitination and degradation of HMG-CoA reductase HMGCR. May be involved in centrosome assembly. This Danio rerio (Zebrafish) protein is Transmembrane and ubiquitin-like domain-containing protein 1 (tmub1).